Here is a 1125-residue protein sequence, read N- to C-terminus: Probable phospholipid-transporting ATPase IIB (1125 aa).

Residues 1–131 (MADGIPLNPV…IKNQKYNIVT (131 aa)) lie on the Cytoplasmic side of the membrane. A helical transmembrane segment spans residues 132–152 (FVPGVLYQQFKFFLNLYFLVV). Topologically, residues 153–161 (ACSQFVPSL) are extracellular. The chain crosses the membrane as a helical span at residues 162 to 182 (KIGYLYTYWAPLGFVLAVTMV). At 183 to 369 (REAVDEVRRC…LDLELNRLTK (187 aa)) the chain is on the cytoplasmic side. Residues 370–390 (ALFLAQVVLSVVMVALQGFLG) form a helical membrane-spanning segment. At 391-395 (PWFRN) the chain is on the extracellular side. A helical transmembrane segment spans residues 396-415 (LFRFVVLFSYIIPISLRVNL). Over 416–928 (DMGKSAYGWM…ALGQFVMHRG (513 aa)) the chain is Cytoplasmic. The active-site 4-aspartylphosphate intermediate is the Asp455. The ATP site is built by Asp455, Lys456, and Thr457. A Mg(2+)-binding site is contributed by Asp455. Residue Thr457 coordinates Mg(2+). The span at 500 to 511 (QSNGSSASSTPS) shows a compositional bias: low complexity. 2 disordered regions span residues 500–525 (QSNG…RKSV) and 552–574 (GANA…RTYQ). Acidic residues predominate over residues 558–567 (ESTEADQDFS). 11 residues coordinate ATP: Glu580, Phe622, Lys627, Lys646, Arg675, Thr676, Thr755, Gly756, Asp757, Arg837, and Lys843. Asp863 contacts Mg(2+). The ATP site is built by Asn866 and Asp867. Asp867 is a Mg(2+) binding site. Residues 929 to 949 (MIISTMQAVFSSIFYFASVPL) form a helical membrane-spanning segment. Topologically, residues 950 to 951 (YQ) are extracellular. Residues 952–972 (GFLMVGYATIYTMFPVFSLVL) form a helical membrane-spanning segment. Residues 973–1001 (DQDVKPEMALLYPELYKDLTKGRSLSFKT) are Cytoplasmic-facing. Residues 1002–1022 (FLIWVLISIYQGGILMYGALV) traverse the membrane as a helical segment. Residues 1023 to 1030 (LFDQEFVH) lie on the Extracellular side of the membrane. A helical membrane pass occupies residues 1031-1051 (VVAISFTALILTELLMVALTI). Residues 1052–1055 (RTWH) are Cytoplasmic-facing. Residues 1056 to 1076 (WLMVVAQLISLACYLASLAFL) form a helical membrane-spanning segment. The Extracellular portion of the chain corresponds to 1077–1088 (NEYFDLSFITTR). A helical transmembrane segment spans residues 1089–1109 (VFLWKVCVITLVSCLPLYIIK). Residues 1110–1125 (YLKRKFSPPSYSKLSS) are Cytoplasmic-facing.

Belongs to the cation transport ATPase (P-type) (TC 3.A.3) family. Type IV subfamily. It depends on Mg(2+) as a cofactor.

It localises to the golgi apparatus. The protein resides in the trans-Golgi network membrane. The catalysed reaction is ATP + H2O + phospholipidSide 1 = ADP + phosphate + phospholipidSide 2.. This is Probable phospholipid-transporting ATPase IIB (atp9b) from Danio rerio (Zebrafish).